An 807-amino-acid chain; its full sequence is Probable phosphoketolase (807 aa).

Belongs to the XFP family. Thiamine diphosphate serves as cofactor.

This Nitrosospira multiformis (strain ATCC 25196 / NCIMB 11849 / C 71) protein is Probable phosphoketolase.